We begin with the raw amino-acid sequence, 384 residues long: Centrosomal protein of 44 kDa (384 aa).

A binds with microtubules and centrioles region spans residues 11 to 188 (RKLEQRLRTL…TKCYSSALVE (178 aa)). The segment at 191–222 (EEEEPTSDSEGGSHLEHEMESPFETAETTPNS) is disordered. A compositionally biased stretch (basic and acidic residues) spans 201–210 (GGSHLEHEME). Coiled-coil stretches lie at residues 221-260 (NSEQ…KGKI) and 353-378 (TEDS…SKLL).

Binds to centriolar microtubules.

The protein localises to the cytoplasm. It localises to the cytoskeleton. The protein resides in the microtubule organizing center. It is found in the centrosome. Its subcellular location is the centriole. The protein localises to the spindle pole. It localises to the midbody. In terms of biological role, centriole-enriched microtubule-binding protein involved in centriole biogenesis. In collaboration with CEP295 and POC1B, is required for the centriole-to-centrosome conversion by ensuring the formation of bona fide centriole wall. Functions as a linker component that maintains centrosome cohesion. Associates with CROCC and regulates its stability and localization to the centrosome. The sequence is that of Centrosomal protein of 44 kDa (cep44) from Xenopus laevis (African clawed frog).